The sequence spans 285 residues: PHO85 cyclin-7 (285 aa).

The span at 1 to 14 (MELSSPSKKTTTSP) shows a compositional bias: low complexity. The segment at 1-42 (MELSSPSKKTTTSPINIPGGNRDNLIIGPHSHSFKTDPFSSN) is disordered. The residue at position 69 (S69) is a Phosphoserine.

The protein belongs to the cyclin family. PHO80 subfamily. As to quaternary structure, forms a cyclin-CDK complex with PHO85. Interacts with the substrate proteins MMR1 and YJL084C. Interacts with the CDK inhibitor (CKI) PHO81.

The protein localises to the cytoplasm. With respect to regulation, the PCL7-PHO85 cyclin-CDK is inhibited by PHO81 in low-phosphate conditions. Functionally, cyclin partner of the cyclin-dependent kinase (CDK) PHO85. Together with cyclin PCL6, controls glycogen phosphorylase and glycogen synthase activities in response to nutrient availablility. The PCL7-PHO85 cyclin-CDK holoenzyme has GLC8 kinase activity and phosphorylates and inactivates the phosphatase PP1-2 inhibitor GLC8, causing activation of PP1-2, which then dephosphorylates and activates glycogen phosphorylase. PCL7-PHO85 also phosphorylates MMR1 and YJL084C. The sequence is that of PHO85 cyclin-7 (PCL7) from Saccharomyces cerevisiae (strain ATCC 204508 / S288c) (Baker's yeast).